The primary structure comprises 428 residues: GTPase Obg (428 aa).

One can recognise an Obg domain in the interval 1–158; sequence MFVDQVQVEV…RFIKLELKVL (158 aa). Residues 159–333 enclose the OBG-type G domain; sequence ADVGLVGFPS…LMHKTAEVLK (175 aa). GTP is bound by residues 165–172, 190–194, 212–215, 282–285, and 314–316; these read GFPSVGKS, FTTLV, DLPG, TKMD, and SSL. Positions 172 and 192 each coordinate Mg(2+). Residues 350–428 enclose the OCT domain; that stretch reads YKYQPEPALK…IDDFTFEFVE (79 aa).

The protein belongs to the TRAFAC class OBG-HflX-like GTPase superfamily. OBG GTPase family. As to quaternary structure, monomer. Requires Mg(2+) as cofactor.

The protein resides in the cytoplasm. An essential GTPase which binds GTP, GDP and possibly (p)ppGpp with moderate affinity, with high nucleotide exchange rates and a fairly low GTP hydrolysis rate. Plays a role in control of the cell cycle, stress response, ribosome biogenesis and in those bacteria that undergo differentiation, in morphogenesis control. The polypeptide is GTPase Obg (Lacticaseibacillus casei (strain BL23) (Lactobacillus casei)).